Reading from the N-terminus, the 122-residue chain is Large ribosomal subunit protein uL14 (122 aa).

Belongs to the universal ribosomal protein uL14 family. In terms of assembly, part of the 50S ribosomal subunit. Forms a cluster with proteins L3 and L19. In the 70S ribosome, L14 and L19 interact and together make contacts with the 16S rRNA in bridges B5 and B8.

Functionally, binds to 23S rRNA. Forms part of two intersubunit bridges in the 70S ribosome. This Geotalea daltonii (strain DSM 22248 / JCM 15807 / FRC-32) (Geobacter daltonii) protein is Large ribosomal subunit protein uL14.